A 118-amino-acid polypeptide reads, in one-letter code: Succinate dehydrogenase assembly factor 4, mitochondrial (118 aa).

The N-terminal 30 residues, 1–30, are a transit peptide targeting the mitochondrion; it reads MQSVTRQTARVLPQMGKQVSYLSTSGAWRA. The segment at 65–118 is disordered; it reads GKLDEFSRHPYQEKEPLKPWPNQTNPYTGEIGGPAGPEPTRYGDWERKGRVSDF. Basic and acidic residues-rich tracts occupy residues 66–81 and 105–118; these read KLDEFSRHPYQEKEPL and RYGDWERKGRVSDF.

Belongs to the SDHAF4 family. In terms of assembly, interacts with SdhA in its FAD-bound form.

Its subcellular location is the mitochondrion matrix. Plays an essential role in the assembly of succinate dehydrogenase (SDH), an enzyme complex (also referred to as respiratory complex II) that is a component of both the tricarboxylic acid (TCA) cycle and the mitochondrial electron transport chain, and which couples the oxidation of succinate to fumarate with the reduction of ubiquinone (coenzyme Q) to ubiquinol. Binds to the flavoprotein subunit SdhA in its FAD-bound form, blocking the generation of excess reactive oxygen species (ROS) and facilitating its assembly with the iron-sulfur protein subunit SdhB into the SDH catalytic dimer. This Drosophila melanogaster (Fruit fly) protein is Succinate dehydrogenase assembly factor 4, mitochondrial.